Reading from the N-terminus, the 40-residue chain is Snaclec tokaracetin subunit alpha (40 aa).

The C-type lectin domain occupies Asp1–Val40. Cys2 and Cys13 are oxidised to a cystine.

The protein belongs to the snaclec family. Heterodimer of subunits alpha and beta; disulfide-linked. In terms of tissue distribution, expressed by the venom gland.

Its subcellular location is the secreted. Its function is as follows. Platelet antagonist that specifically and reversibly binds to a site on platelet glycoprotein Ibalpha (GP1BA) close to or identical with the site for vWF binding. It inhibits the binding of vWF to platelets and vWF-dependent shear-induced platelet aggregation. This chain is Snaclec tokaracetin subunit alpha, found in Protobothrops tokarensis (Tokara habu).